We begin with the raw amino-acid sequence, 475 residues long: 23S rRNA (uracil(1939)-C(5))-methyltransferase RlmD (475 aa).

Residues 1 to 76 (MHRGDKPVNI…SRFSKAKVRE (76 aa)) enclose the TRAM domain. [4Fe-4S] cluster is bound by residues cysteine 89, cysteine 95, cysteine 98, and cysteine 178. S-adenosyl-L-methionine-binding residues include glutamine 299, phenylalanine 328, asparagine 333, glutamate 349, aspartate 377, and aspartate 398. Cysteine 431 acts as the Nucleophile in catalysis.

The protein belongs to the class I-like SAM-binding methyltransferase superfamily. RNA M5U methyltransferase family. RlmD subfamily.

It catalyses the reaction uridine(1939) in 23S rRNA + S-adenosyl-L-methionine = 5-methyluridine(1939) in 23S rRNA + S-adenosyl-L-homocysteine + H(+). Functionally, catalyzes the formation of 5-methyl-uridine at position 1939 (m5U1939) in 23S rRNA. The polypeptide is 23S rRNA (uracil(1939)-C(5))-methyltransferase RlmD (Polynucleobacter necessarius subsp. necessarius (strain STIR1)).